A 513-amino-acid polypeptide reads, in one-letter code: Noroxomaritidine synthase 1 (513 aa).

A helical membrane pass occupies residues 18-34 (ILIAIACLVVFSLLRSA). Cysteine 458 contributes to the heme binding site.

This sequence belongs to the cytochrome P450 family. Heme is required as a cofactor. As to expression, mostly expressed in stems, and, to a lower extent, in bulbs, roots, leaves and flowers.

Its subcellular location is the membrane. It carries out the reaction 4'-O-methylnorbelladine + reduced [NADPH--hemoprotein reductase] + O2 = (10bR,4aS)-noroxomaritidine + oxidized [NADPH--hemoprotein reductase] + 2 H2O + H(+). The enzyme catalyses 4'-O-methylnorbelladine + reduced [NADPH--hemoprotein reductase] + O2 = (10bS,4aR)-noroxomaritidine + oxidized [NADPH--hemoprotein reductase] + 2 H2O + H(+). It participates in alkaloid biosynthesis. In terms of biological role, cytochrome P450 that catalyzes an intramolecular para-para' C-C phenol coupling of 4'-O-methylnorbelladine in alkaloids biosynthesis, including haemanthamine- and crinamine-type alkaloids, promising anticancer agents. Catalyzes the formation of (10bR,4aS)-noroxomaritidine and (10bS,4aR)-noroxomaritidine from 4'-O-methylnorbelladine. The polypeptide is Noroxomaritidine synthase 1 (Narcissus pseudonarcissus (Daffodil)).